The following is a 597-amino-acid chain: UvrABC system protein C (597 aa).

A GIY-YIG domain is found at 14–91 (KKPGCYLWKD…INQYQPRFNL (78 aa)).

Belongs to the UvrC family. As to quaternary structure, interacts with UvrB in an incision complex.

It localises to the cytoplasm. Functionally, the UvrABC repair system catalyzes the recognition and processing of DNA lesions. UvrC both incises the 5' and 3' sides of the lesion. The N-terminal half is responsible for the 3' incision and the C-terminal half is responsible for the 5' incision. In Mycoplasma genitalium (strain ATCC 33530 / DSM 19775 / NCTC 10195 / G37) (Mycoplasmoides genitalium), this protein is UvrABC system protein C.